The following is a 1114-amino-acid chain: Mediator of RNA polymerase II transcription subunit 14 (1114 aa).

3 disordered regions span residues 1–27, 40–79, and 120–141; these read MPGV…QDGL, ANAQ…GPPE, and HGIH…SPGN. The span at 126 to 140 shows a compositional bias: polar residues; the sequence is TAPTTGKSPGNQSPG.

Belongs to the Mediator complex subunit 14 family. In terms of assembly, component of the Mediator complex.

It localises to the nucleus. Functionally, component of the Mediator complex, a coactivator involved in the regulated transcription of nearly all RNA polymerase II-dependent genes. Mediator functions as a bridge to convey information from gene-specific regulatory proteins to the basal RNA polymerase II transcription machinery. Mediator is recruited to promoters by direct interactions with regulatory proteins and serves as a scaffold for the assembly of a functional preinitiation complex with RNA polymerase II and the general transcription factors. This is Mediator of RNA polymerase II transcription subunit 14 (rgr1) from Aspergillus niger (strain ATCC MYA-4892 / CBS 513.88 / FGSC A1513).